Consider the following 181-residue polypeptide: Large ribosomal subunit protein uL6 (181 aa).

This sequence belongs to the universal ribosomal protein uL6 family. As to quaternary structure, part of the 50S ribosomal subunit.

This protein binds to the 23S rRNA, and is important in its secondary structure. It is located near the subunit interface in the base of the L7/L12 stalk, and near the tRNA binding site of the peptidyltransferase center. In Synechococcus sp. (strain JA-3-3Ab) (Cyanobacteria bacterium Yellowstone A-Prime), this protein is Large ribosomal subunit protein uL6.